Reading from the N-terminus, the 133-residue chain is Small heat shock protein ibp (133 aa).

Residues 11-126 form the sHSP domain; sequence EQPLSENPNY…KPKKISINEE (116 aa).

The protein belongs to the small heat shock protein (HSP20) family.

The chain is Small heat shock protein ibp (ibp) from Wigglesworthia glossinidia brevipalpis.